The following is a 228-amino-acid chain: ATP phosphoribosyltransferase (228 aa).

This sequence belongs to the ATP phosphoribosyltransferase family. Short subfamily. In terms of assembly, heteromultimer composed of HisG and HisZ subunits.

The protein resides in the cytoplasm. The enzyme catalyses 1-(5-phospho-beta-D-ribosyl)-ATP + diphosphate = 5-phospho-alpha-D-ribose 1-diphosphate + ATP. Its pathway is amino-acid biosynthesis; L-histidine biosynthesis; L-histidine from 5-phospho-alpha-D-ribose 1-diphosphate: step 1/9. Its function is as follows. Catalyzes the condensation of ATP and 5-phosphoribose 1-diphosphate to form N'-(5'-phosphoribosyl)-ATP (PR-ATP). Has a crucial role in the pathway because the rate of histidine biosynthesis seems to be controlled primarily by regulation of HisG enzymatic activity. The sequence is that of ATP phosphoribosyltransferase from Moorella thermoacetica (strain ATCC 39073 / JCM 9320).